Consider the following 563-residue polypeptide: Pyruvate decarboxylase isozyme 2 (563 aa).

Asp-28, His-115, Tyr-157, and Arg-224 together coordinate pyruvate. Residues Thr-390 and 413–415 (GSI) contribute to the thiamine diphosphate site. Asp-444 provides a ligand contact to Mg(2+). Residues 445–446 (GS) and 471–476 (NNGYTI) each bind thiamine diphosphate. Asn-471 and Gly-473 together coordinate Mg(2+). Position 477 (Glu-477) interacts with pyruvate.

The protein belongs to the TPP enzyme family. Homotetramer. The cofactor is Mg(2+). Thiamine diphosphate is required as a cofactor.

It is found in the cytoplasm. Its subcellular location is the nucleus. The enzyme catalyses pyruvate + H(+) = acetaldehyde + CO2. It catalyses the reaction 3-methyl-2-oxobutanoate + H(+) = 2-methylpropanal + CO2. The catalysed reaction is (S)-3-methyl-2-oxopentanoate + H(+) = 2-methylbutanal + CO2. It carries out the reaction indole-3-pyruvate + H(+) = indole-3-acetaldehyde + CO2. The enzyme catalyses 3-phenylpyruvate + H(+) = 2-phenylacetaldehyde + CO2. It catalyses the reaction 2-oxobutanoate + H(+) = propanal + CO2. The catalysed reaction is 2-oxopentanoate + H(+) = butanal + CO2. It carries out the reaction 2 acetaldehyde = acetoin. The enzyme catalyses acetaldehyde + pyruvate + H(+) = acetoin + CO2. The protein operates within fermentation; ethanol fermentation. It participates in amino-acid degradation; Ehrlich pathway. Allosterically activated by its substrate, pyruvate. Second most abundant of three pyruvate decarboxylases (PDC1, PDC5, PDC6) implicated in the nonoxidative conversion of pyruvate to acetaldehyde and carbon dioxide during alcoholic fermentation. Most of the produced acetaldehyde is subsequently reduced to ethanol, but some is required for cytosolic acetyl-CoA production for biosynthetic pathways. The enzyme is also one of five 2-oxo acid decarboxylases (PDC1, PDC5, PDC6, ARO10, and THI3) able to decarboxylate more complex 2-oxo acids (alpha-keto-acids) than pyruvate, which seem mainly involved in amino acid catabolism. Here the enzyme catalyzes the decarboxylation of amino acids, which, in a first step, have been transaminated to the corresponding 2-oxo acids. In a third step, the resulting aldehydes are reduced to alcohols, collectively referred to as fusel oils or alcohols. Its preferred substrates are the transaminated amino acids derived from threonine (2-oxobutanoate), norvaline (2-oxopentanoate), valine (3-methyl-2-oxobutanoate, also alpha-keto-isovalerate), isoleucine ((3S)-3-methyl-2-oxopentanoate, also alpha-keto-beta-methylvalerate), phenylalanine (phenylpyruvate), and tryptophan (3-(indol-3-yl)pyruvate), whereas transaminated leucine is no substrate. In a side-reaction the carbanionic intermediate (or active aldehyde) generated by decarboxylation or by activation of an aldehyde can react with an aldehyde via condensation (or carboligation) yielding a 2-hydroxy ketone, collectively called acyloins. The chain is Pyruvate decarboxylase isozyme 2 (PDC5) from Saccharomyces cerevisiae (strain ATCC 204508 / S288c) (Baker's yeast).